The sequence spans 335 residues: Pyruvate dehydrogenase E1 component subunit beta (335 aa).

Residue Glu-60 coordinates thiamine diphosphate. Residues Ala-161, Ile-162, and Asn-166 each contribute to the K(+) site.

Heterodimer of an alpha and a beta chain. Requires thiamine diphosphate as cofactor.

Its subcellular location is the plastid. The protein localises to the chloroplast. It catalyses the reaction N(6)-[(R)-lipoyl]-L-lysyl-[protein] + pyruvate + H(+) = N(6)-[(R)-S(8)-acetyldihydrolipoyl]-L-lysyl-[protein] + CO2. Its function is as follows. The pyruvate dehydrogenase complex catalyzes the overall conversion of pyruvate to acetyl-CoA and CO(2). It contains multiple copies of three enzymatic components: pyruvate dehydrogenase (E1), dihydrolipoamide acetyltransferase (E2) and lipoamide dehydrogenase (E3). The polypeptide is Pyruvate dehydrogenase E1 component subunit beta (pdhB) (Chlorokybus atmophyticus (Soil alga)).